The primary structure comprises 164 residues: Transcription antitermination protein NusB (164 aa).

The protein belongs to the NusB family.

Functionally, involved in transcription antitermination. Required for transcription of ribosomal RNA (rRNA) genes. Binds specifically to the boxA antiterminator sequence of the ribosomal RNA (rrn) operons. This Chlamydia muridarum (strain MoPn / Nigg) protein is Transcription antitermination protein NusB.